A 541-amino-acid chain; its full sequence is Zingiberene synthase (541 aa).

Positions 295, 299, 439, 443, and 447 each coordinate Mg(2+). Residues 295–299 carry the DDXXD motif motif; the sequence is DDIID.

This sequence belongs to the terpene synthase family. Mg(2+) serves as cofactor. The cofactor is Mn(2+).

It localises to the cytoplasm. It carries out the reaction (2E,6E)-farnesyl diphosphate = alpha-zingiberene + diphosphate. The protein operates within secondary metabolite biosynthesis; terpenoid biosynthesis. In terms of biological role, sesquiterpene synthase converting farnesyl diphosphate into two major products, zingiberene &gt; beta-sesquiphellandrene, and five minor products, 7-epi-sesquithujene, sesquisabinene A, (E)-alpha-bergamotene, (E)-beta-farnesene and beta-bisabolene. Can also accept geranyl diphosphate as substrate, producing nine monoterpenes, with myrcene, limonene and alpha-terpinolene as the major products. This Sorghum bicolor (Sorghum) protein is Zingiberene synthase (TPS1).